Reading from the N-terminus, the 649-residue chain is Beta-galactosidase-1-like protein 3 (649 aa).

E203 acts as the Proton donor in catalysis. Catalysis depends on E277, which acts as the Nucleophile.

The protein belongs to the glycosyl hydrolase 35 family.

The sequence is that of Beta-galactosidase-1-like protein 3 (Glb1l3) from Mus musculus (Mouse).